The sequence spans 228 residues: 7-cyano-7-deazaguanine synthase (228 aa).

9–19 (LSGGPDSTTVL) provides a ligand contact to ATP. 4 residues coordinate Zn(2+): Cys-193, Cys-203, Cys-206, and Cys-209.

The protein belongs to the QueC family. It depends on Zn(2+) as a cofactor.

It carries out the reaction 7-carboxy-7-deazaguanine + NH4(+) + ATP = 7-cyano-7-deazaguanine + ADP + phosphate + H2O + H(+). The protein operates within purine metabolism; 7-cyano-7-deazaguanine biosynthesis. Functionally, catalyzes the ATP-dependent conversion of 7-carboxy-7-deazaguanine (CDG) to 7-cyano-7-deazaguanine (preQ(0)). This Rickettsia rickettsii (strain Iowa) protein is 7-cyano-7-deazaguanine synthase.